The sequence spans 750 residues: Sulfhydryl oxidase 1 (750 aa).

An N-terminal signal peptide occupies residues 1–32 (MRRCGRHSGPPSLLLLLLLLPPLLLSVPGAYA). Positions 33-159 (ARLSVLYSSS…RMRLIDALES (127 aa)) constitute a Thioredoxin domain. Active-site nucleophile residues include Cys73 and Cys76. Disulfide bonds link Cys73/Cys76 and Cys104/Cys113. Asn133 and Asn246 each carry an N-linked (GlcNAc...) asparagine glycan. Residues Cys396 and Cys408 are joined by a disulfide bond. Positions 399-506 (SEPHFRGFPC…EDPQFPKVQW (108 aa)) constitute an ERV/ALR sulfhydryl oxidase domain. FAD is bound by residues Arg404, Trp411, His415, Asp454, His458, 481–488 (WTSHNRVN), Lys503, and Trp506. Cys452 and Cys455 are oxidised to a cystine. Cys512 and Cys515 are joined by a disulfide. Disordered regions lie at residues 545–567 (VRDP…ASPN) and 585–632 (EQAA…PEHT). The span at 587–597 (AASAASPGATA) shows a compositional bias: low complexity. The helical transmembrane segment at 710-730 (FLDISLCVGLYSVSFMGLLAM) threads the bilayer.

The protein belongs to the quiescin-sulfhydryl oxidase (QSOX) family. In terms of assembly, monomer. It depends on FAD as a cofactor. Post-translationally, N-glycosylated. O-glycosylated on Thr and Ser residues. In terms of tissue distribution, isoform 3: Detected in seminal vesicle fluid (at protein level). Isoform 1: Detected in brain, hypophysis, heart, testis and the seminal vesicle. Isoform 3: Highly expressed in the seminal vesicles followed by testis, heart, brain, thymus, hypophysis and lung. Also expressed in prostate, kidney, spleen, liver.

It localises to the golgi apparatus membrane. It is found in the secreted. The catalysed reaction is 2 R'C(R)SH + O2 = R'C(R)S-S(R)CR' + H2O2. In terms of biological role, catalyzes the oxidation of sulfhydryl groups in peptide and protein thiols to disulfides with the reduction of oxygen to hydrogen peroxide. Plays a role in disulfide bond formation in a variety of extracellular proteins. In fibroblasts, required for normal incorporation of laminin into the extracellular matrix, and thereby for normal cell-cell adhesion and cell migration. This Rattus norvegicus (Rat) protein is Sulfhydryl oxidase 1 (Qsox1).